A 152-amino-acid chain; its full sequence is Type-1 angiotensin II receptor-associated protein (152 aa).

The Extracellular segment spans residues 1–23; it reads MELPAVNLKVILLGHWLLTTWGC. The helical transmembrane segment at 24–44 threads the bilayer; the sequence is IVFSGSYAWANFTILALGVWA. Residues 45–55 lie on the Cytoplasmic side of the membrane; the sequence is VAQRDSIDAIS. The helical transmembrane segment at 56–76 threads the bilayer; the sequence is MFLGGLLATIFLDIVHISIFY. Over 77–86 the chain is Extracellular; the sequence is PRAGLTDTGR. Residues 87 to 107 form a helical membrane-spanning segment; it reads FGAGMAILSLLLKPLSCCFVY. Over 108-152 the chain is Cytoplasmic; the sequence is HMYRQRGGFLGSSQDRSAYQTIDSAEAPANAFAVPEGRGQDARGY. Phosphoserine is present on residues Ser119 and Ser120. Thr128 is subject to Phosphothreonine. Ser131 is subject to Phosphoserine.

Interacts with RACK1, and with the carboxy-terminal region of AGTR1.

It is found in the endoplasmic reticulum membrane. The protein localises to the golgi apparatus membrane. Its subcellular location is the cytoplasmic vesicle membrane. Appears to be a negative regulator of type-1 angiotensin II receptor-mediated signaling by regulating receptor internalization as well as mechanism of receptor desensitization such as phosphorylation. Also induces a decrease in cell proliferation and angiotensin II-stimulated transcriptional activity. The protein is Type-1 angiotensin II receptor-associated protein (AGTRAP) of Pongo abelii (Sumatran orangutan).